Consider the following 468-residue polypeptide: Tissue alpha-L-fucosidase (468 aa).

The signal sequence occupies residues 1–22 (MRSWVVGARLLLLLQLVLVLGA). The residue at position 173 (T173) is a Phosphothreonine. N244, N271, and N320 each carry an N-linked (GlcNAc...) asparagine glycan.

It belongs to the glycosyl hydrolase 29 family. Homotetramer.

The protein localises to the lysosome. It carries out the reaction an alpha-L-fucoside + H2O = L-fucose + an alcohol. The enzyme catalyses a neolactoside IV(2)-alpha-Fuc-nLc4Cer(d18:1(4E)) + H2O = a neolactoside nLc4Cer(d18:1(4E)) + L-fucose. The catalysed reaction is a neolactoside IV(2)-alpha-Fuc-nLc4Cer(d18:0) + H2O = a neolactoside nLc4Cer(d18:0) + L-fucose. Functionally, alpha-L-fucosidase is responsible for hydrolyzing the alpha-1,6-linked fucose joined to the reducing-end N-acetylglucosamine of the carbohydrate moieties of glycoproteins. In Bos taurus (Bovine), this protein is Tissue alpha-L-fucosidase (FUCA1).